The following is an 80-amino-acid chain: U-actitoxin-Avd9a (80 aa).

Residues 1 to 20 (MNLKVLAVFVLCAILVVVTA) form the signal peptide. The propeptide occupies 21–39 (ERRGTETGVYKKDTLQDLI). In terms of domain architecture, ShKT spans 45–80 (CIDRFPTGTCKQVKKGGSCKNSDKYRMNCRKTCGLC). 3 cysteine pairs are disulfide-bonded: Cys45/Cys80, Cys54/Cys73, and Cys63/Cys77. Positions 68–69 (KY) are crucial for binding to potassium channels.

The protein belongs to the sea anemone type 1 potassium channel toxin family. Type 1b subfamily.

Its subcellular location is the secreted. It is found in the nematocyst. Inhibits voltage-gated potassium channels (Kv1/KCNA). In Anemonia viridis (Snakelocks anemone), this protein is U-actitoxin-Avd9a.